A 140-amino-acid polypeptide reads, in one-letter code: Nucleoside diphosphate kinase (140 aa).

ATP is bound by residues Lys-11, Phe-59, Arg-87, Thr-93, Arg-104, and Asn-114. Residue His-117 is the Pros-phosphohistidine intermediate of the active site.

This sequence belongs to the NDK family. As to quaternary structure, homotetramer. Mg(2+) is required as a cofactor.

Its subcellular location is the cytoplasm. It catalyses the reaction a 2'-deoxyribonucleoside 5'-diphosphate + ATP = a 2'-deoxyribonucleoside 5'-triphosphate + ADP. The enzyme catalyses a ribonucleoside 5'-diphosphate + ATP = a ribonucleoside 5'-triphosphate + ADP. Major role in the synthesis of nucleoside triphosphates other than ATP. The ATP gamma phosphate is transferred to the NDP beta phosphate via a ping-pong mechanism, using a phosphorylated active-site intermediate. The sequence is that of Nucleoside diphosphate kinase from Rickettsia canadensis (strain McKiel).